Consider the following 358-residue polypeptide: MVMRSVDLRSDTVTRPTDAMREAMCNAEVDDDVLGYDPTARRLEEEMAKMMGKEAALFVPSGTMGNLISVMVHCDVRGSEVILGDNCHIHVYENGGISTIGGVHPKTVKNEEDGTMDLEAIEAAIRDPKGSTFYPSTRLICLENTHANSGGRCLSVEYTEKVGEIAKRHGVKLHIDGARLFNASIALGVPVHKLVKAADSVQVCLSKGLGAPVGSVIVGSQSFIEKAKTVRKTLGGGMRQIGVLCAAALVALQENLPKLQHDHKKAKLLAEGLNQMKGIRVNVAAVETNMIFMDMEDGSRLTAEKLRKNLEENGILLIRGNSSRIRIVIHHQITTSDVHYTLSCFQQAMLTMQEPSRT.

Residue Lys-207 is modified to N6-(pyridoxal phosphate)lysine.

This sequence belongs to the threonine aldolase family. Requires pyridoxal 5'-phosphate as cofactor. As to expression, expressed in root tips, seedlings, carpels and seeds.

The enzyme catalyses L-threonine = acetaldehyde + glycine. It carries out the reaction L-allo-threonine = acetaldehyde + glycine. The protein operates within amino-acid degradation; L-threonine degradation via aldolase pathway; acetaldehyde and glycine from L-threonine: step 1/1. Threonine aldolase involved in threonine degradation to glycine. May play a role in the removal of L-allo-threonine. The sequence is that of Low-specificity L-threonine aldolase 1 from Arabidopsis thaliana (Mouse-ear cress).